Consider the following 495-residue polypeptide: Ectonucleoside triphosphate diphosphohydrolase 2 (495 aa).

At 1–4 the chain is on the cytoplasmic side; the sequence is MAGK. Residues 5 to 25 form a helical membrane-spanning segment; sequence LVSLVPPLLLAAVGLAGLLLL. The Extracellular portion of the chain corresponds to 26-462; the sequence is CVPTQDVREP…PGLRKGTHFS (437 aa). Residue Asn-64 is glycosylated (N-linked (GlcNAc...) asparagine). A disulfide bridge links Cys-75 with Cys-99. The N-linked (GlcNAc...) asparagine glycan is linked to Asn-129. Glu-165 functions as the Proton acceptor in the catalytic mechanism. Residue 204 to 208 coordinates ATP; it reads GASTQ. 2 disulfide bridges follow: Cys-242/Cys-284 and Cys-265/Cys-310. N-linked (GlcNAc...) asparagine glycosylation is found at Asn-294 and Asn-319. 2 disulfides stabilise this stretch: Cys-323–Cys-328 and Cys-377–Cys-399. 2 N-linked (GlcNAc...) asparagine glycosylation sites follow: Asn-378 and Asn-443. A helical membrane pass occupies residues 463 to 483; that stretch reads SWVALLLLFTVLILAALVLLL. The Cytoplasmic portion of the chain corresponds to 484–495; the sequence is RQVRSAKSPGAL.

The protein belongs to the GDA1/CD39 NTPase family. Requires Ca(2+) as cofactor. The cofactor is Mg(2+).

The protein resides in the cell membrane. Its function is as follows. In the nervous system, could hydrolyze ATP and other nucleotides to regulate purinergic neurotransmission. Hydrolyzes ADP only to a marginal extent. This Mus musculus (Mouse) protein is Ectonucleoside triphosphate diphosphohydrolase 2 (Entpd2).